A 540-amino-acid chain; its full sequence is Chaperonin GroEL 1 (540 aa).

ATP is bound by residues 29 to 32, 86 to 90, Gly413, 477 to 479, and Asp493; these read TLGP, DGTTT, and NAA.

It belongs to the chaperonin (HSP60) family. In terms of assembly, forms a cylinder of 14 subunits composed of two heptameric rings stacked back-to-back. Interacts with the co-chaperonin GroES.

The protein localises to the cytoplasm. It carries out the reaction ATP + H2O + a folded polypeptide = ADP + phosphate + an unfolded polypeptide.. Functionally, together with its co-chaperonin GroES, plays an essential role in assisting protein folding. The GroEL-GroES system forms a nano-cage that allows encapsulation of the non-native substrate proteins and provides a physical environment optimized to promote and accelerate protein folding. The sequence is that of Chaperonin GroEL 1 from Salinispora arenicola (strain CNS-205).